Consider the following 193-residue polypeptide: Large ribosomal subunit protein bL17m (193 aa).

Belongs to the bacterial ribosomal protein bL17 family. In terms of assembly, component of the mitochondrial large ribosomal subunit (mt-LSU). Mature N.crassa 74S mitochondrial ribosomes consist of a small (37S) and a large (54S) subunit. The 37S small subunit contains a 16S ribosomal RNA (16S mt-rRNA) and 32 different proteins. The 54S large subunit contains a 23S rRNA (23S mt-rRNA) and 42 different proteins.

The protein localises to the mitochondrion. Functionally, component of the mitochondrial ribosome (mitoribosome), a dedicated translation machinery responsible for the synthesis of mitochondrial genome-encoded proteins, including at least some of the essential transmembrane subunits of the mitochondrial respiratory chain. The mitoribosomes are attached to the mitochondrial inner membrane and translation products are cotranslationally integrated into the membrane. The sequence is that of Large ribosomal subunit protein bL17m (mrpl8) from Neurospora crassa (strain ATCC 24698 / 74-OR23-1A / CBS 708.71 / DSM 1257 / FGSC 987).